A 276-amino-acid chain; its full sequence is DnaJ homolog subfamily C member 27-B (276 aa).

GTP contacts are provided by residues 23–30, 71–75, and 137–140; these read GNAEVGKS, DMAGH, and NKID. The J domain maps to 220-276; it reads DSWDMLGVKPGATRDEVNKAYRKLAVLLHPDKCVAPGSEDAFKAVVNARTALLKNIK.

Belongs to the small GTPase superfamily. Rab family.

The protein resides in the nucleus. GTPase possibly involved in regulation of the MEK/ERK pathway. This is DnaJ homolog subfamily C member 27-B (dnajc27-b) from Xenopus laevis (African clawed frog).